Here is a 167-residue protein sequence, read N- to C-terminus: MPGNRPHYGRWPQHDFTSLKKLRPQSVTSRIQPGSDVIVCAEMDEQWGYVGAKSRQRWLFYAYDSLRKTVVAHVFGERTMATLGRLMSLLSPFDVVIWMTDGWPLYESRLKGKLHVISKRYTQRIERHNLNLRQHLARLGRKSLSFSKSVELHDKVIGHYLNIKHYQ.

Belongs to the transposase 27 family.

Its function is as follows. Absolutely required for transposition of IS1. The protein is Insertion element IS1 protein InsB (insB) of Escherichia coli.